The chain runs to 316 residues: Acetyl-coenzyme A carboxylase carboxyl transferase subunit beta (316 aa).

The CoA carboxyltransferase N-terminal domain maps to 39–308 (LWHKCSKCGV…TPPMVLWETM (270 aa)). Residues Cys43, Cys46, Cys62, and Cys65 each coordinate Zn(2+). Residues 43-65 (CSKCGVLTYTKDLRANQMVCVEC) form a C4-type zinc finger.

The protein belongs to the AccD/PCCB family. As to quaternary structure, acetyl-CoA carboxylase is a heterohexamer composed of biotin carboxyl carrier protein (AccB), biotin carboxylase (AccC) and two subunits each of ACCase subunit alpha (AccA) and ACCase subunit beta (AccD). Zn(2+) is required as a cofactor.

It localises to the cytoplasm. It carries out the reaction N(6)-carboxybiotinyl-L-lysyl-[protein] + acetyl-CoA = N(6)-biotinyl-L-lysyl-[protein] + malonyl-CoA. It functions in the pathway lipid metabolism; malonyl-CoA biosynthesis; malonyl-CoA from acetyl-CoA: step 1/1. Functionally, component of the acetyl coenzyme A carboxylase (ACC) complex. Biotin carboxylase (BC) catalyzes the carboxylation of biotin on its carrier protein (BCCP) and then the CO(2) group is transferred by the transcarboxylase to acetyl-CoA to form malonyl-CoA. This Nostoc sp. (strain PCC 7120 / SAG 25.82 / UTEX 2576) protein is Acetyl-coenzyme A carboxylase carboxyl transferase subunit beta.